We begin with the raw amino-acid sequence, 140 residues long: UPF0251 protein Athe_2281 (140 aa).

Belongs to the UPF0251 family.

This chain is UPF0251 protein Athe_2281, found in Caldicellulosiruptor bescii (strain ATCC BAA-1888 / DSM 6725 / KCTC 15123 / Z-1320) (Anaerocellum thermophilum).